The sequence spans 253 residues: Sugar fermentation stimulation protein homolog (253 aa).

This sequence belongs to the SfsA family.

The sequence is that of Sugar fermentation stimulation protein homolog from Chromohalobacter salexigens (strain ATCC BAA-138 / DSM 3043 / CIP 106854 / NCIMB 13768 / 1H11).